The following is a 164-amino-acid chain: Transcription antitermination protein NusB (164 aa).

The protein belongs to the NusB family.

Functionally, involved in transcription antitermination. Required for transcription of ribosomal RNA (rRNA) genes. Binds specifically to the boxA antiterminator sequence of the ribosomal RNA (rrn) operons. The polypeptide is Transcription antitermination protein NusB (Mycolicibacterium gilvum (strain PYR-GCK) (Mycobacterium gilvum (strain PYR-GCK))).